A 302-amino-acid chain; its full sequence is Glutaminase (302 aa).

Positions 61, 111, 155, 162, 186, 238, and 256 each coordinate substrate.

It belongs to the glutaminase family. As to quaternary structure, homotetramer.

The catalysed reaction is L-glutamine + H2O = L-glutamate + NH4(+). This chain is Glutaminase, found in Pseudomonas fluorescens (strain ATCC BAA-477 / NRRL B-23932 / Pf-5).